The chain runs to 159 residues: 2-C-methyl-D-erythritol 2,4-cyclodiphosphate synthase (159 aa).

The a divalent metal cation site is built by Asp9 and His11. 4-CDP-2-C-methyl-D-erythritol 2-phosphate-binding positions include 9–11 (DVH) and 35–36 (HS). A divalent metal cation is bound at residue His43. Residues 57-59 (DLG), 62-66 (FPDTD), 133-136 (TTTE), Phe140, and Arg143 each bind 4-CDP-2-C-methyl-D-erythritol 2-phosphate.

This sequence belongs to the IspF family. Homotrimer. A divalent metal cation is required as a cofactor.

It catalyses the reaction 4-CDP-2-C-methyl-D-erythritol 2-phosphate = 2-C-methyl-D-erythritol 2,4-cyclic diphosphate + CMP. It participates in isoprenoid biosynthesis; isopentenyl diphosphate biosynthesis via DXP pathway; isopentenyl diphosphate from 1-deoxy-D-xylulose 5-phosphate: step 4/6. Functionally, involved in the biosynthesis of isopentenyl diphosphate (IPP) and dimethylallyl diphosphate (DMAPP), two major building blocks of isoprenoid compounds. Catalyzes the conversion of 4-diphosphocytidyl-2-C-methyl-D-erythritol 2-phosphate (CDP-ME2P) to 2-C-methyl-D-erythritol 2,4-cyclodiphosphate (ME-CPP) with a corresponding release of cytidine 5-monophosphate (CMP). The polypeptide is 2-C-methyl-D-erythritol 2,4-cyclodiphosphate synthase (Shouchella clausii (strain KSM-K16) (Alkalihalobacillus clausii)).